A 230-amino-acid polypeptide reads, in one-letter code: RNA chaperone ProQ (230 aa).

Basic and acidic residues predominate over residues 105–125 (EAKARVQAQREQHQAKKREAG). Residues 105 to 182 (EAKARVQAQR…EQRKPVTDTT (78 aa)) form a disordered region. The span at 154 to 167 (PSRPQAARPASAPR) shows a compositional bias: low complexity. Residues 168-178 (AESRVEQRKPV) show a composition bias toward basic and acidic residues.

Belongs to the ProQ family.

Its subcellular location is the cytoplasm. Functionally, RNA chaperone with significant RNA binding, RNA strand exchange and RNA duplexing activities. May regulate ProP activity through an RNA-based, post-transcriptional mechanism. The sequence is that of RNA chaperone ProQ from Erwinia tasmaniensis (strain DSM 17950 / CFBP 7177 / CIP 109463 / NCPPB 4357 / Et1/99).